Here is a 309-residue protein sequence, read N- to C-terminus: Lactamase-like protein aptB (309 aa).

4 residues coordinate Zn(2+): histidine 97, histidine 99, aspartate 101, and histidine 102. Aspartate 101 acts as the Proton donor/acceptor in catalysis.

This sequence belongs to the metallo-beta-lactamase superfamily. Zn(2+) serves as cofactor.

The enzyme catalyses 2,3,6,8,9-pentahydroxy-1-oxo-3-(2-oxopropyl)-1,2,3,4-tetrahydroanthracene-2-carboxyl-[ACP] + H2O = 2,3,6,8,9-pentahydroxy-1-oxo-3-(2-oxopropyl)-1,2,3,4-tetrahydroanthracene-2-carboxylate + holo-[ACP] + H(+). The protein operates within secondary metabolite biosynthesis. In terms of biological role, lactamase-like protein; part of the gene cluster that mediates the biosynthesis of asperthecin, an anthraquinone pigment. Polyketide synthase (PKS) aptA catalyzes the formation of the aromatic polyketide from acetyl coenzyme A and seven malonyl coenzyme A molecules. Polyketide is subsequently hydrolyzed by the action of aptB into endocrocin-9-anthrone. Endocrocin-9-anthrone is then oxidized into endocrocin by aptC. Endocrocin is likely to decarboxylate spontaneously to form emodin which explains why there is no decarboxylase in the asperthecin biosynthesis cluster. Finally, aptC or another endogenous oxygenase catalyzes additional oxidation steps to form asperthecin. In Emericella nidulans (strain FGSC A4 / ATCC 38163 / CBS 112.46 / NRRL 194 / M139) (Aspergillus nidulans), this protein is Lactamase-like protein aptB.